The chain runs to 515 residues: Fibril protein (515 aa).

At M1 the chain carries Blocked amino end (Met). 4 helical regions span residues 21 to 34 (VKKYWWKNCVIQHV), 206 to 228 (HKFKMYETVNTLKYLLRRLFNLL), 357 to 376 (KIETVETVANEIAAAIAEKC), and 426 to 440 (SNEFLKYLNEALKDV).

Its subcellular location is the cytoplasm. The protein resides in the cytoskeleton. In terms of biological role, acts as a cytoskeletal structure involved in the shape and motility of spiroplasmas. The polypeptide is Fibril protein (Spiroplasma citri).